Reading from the N-terminus, the 163-residue chain is Putative 4-hydroxy-4-methyl-2-oxoglutarate aldolase (163 aa).

Residues 76–79 (GDML) and R98 contribute to the substrate site. Position 99 (D99) interacts with a divalent metal cation.

Belongs to the class II aldolase/RraA-like family. Homotrimer. A divalent metal cation serves as cofactor.

It catalyses the reaction 4-hydroxy-4-methyl-2-oxoglutarate = 2 pyruvate. The enzyme catalyses oxaloacetate + H(+) = pyruvate + CO2. Functionally, catalyzes the aldol cleavage of 4-hydroxy-4-methyl-2-oxoglutarate (HMG) into 2 molecules of pyruvate. Also contains a secondary oxaloacetate (OAA) decarboxylase activity due to the common pyruvate enolate transition state formed following C-C bond cleavage in the retro-aldol and decarboxylation reactions. The protein is Putative 4-hydroxy-4-methyl-2-oxoglutarate aldolase of Pseudomonas fluorescens (strain ATCC BAA-477 / NRRL B-23932 / Pf-5).